The sequence spans 547 residues: Methyl-accepting chemotaxis citrate transducer (547 aa).

Topologically, residues 1–5 (MKNIK) are cytoplasmic. Residues 6 to 29 (VITGVIATLGIFSALLLVTGILFY) form a helical membrane-spanning segment. The Periplasmic portion of the chain corresponds to 30–189 (SAVSSDRLNF…ASDQNQSSFT (160 aa)). The chain crosses the membrane as a helical span at residues 190–213 (QMQWTLGIILLIVLIVLAFIWLGL). Over 214 to 547 (QRVLLRPLQR…AAEQANWESF (334 aa)) the chain is Cytoplasmic. One can recognise an HAMP domain in the interval 215 to 267 (RVLLRPLQRIMAHIQTIADGDLTHEIEAEGRSEMGQLAAGLKTMQQSLIRTVS). Positions 272-501 (NADSIYTGAG…ESAAAAAALE (230 aa)) constitute a Methyl-accepting transducer domain. Glutamine 296 is modified (glutamate methyl ester (Gln)). Position 303 is a glutamate methyl ester (Glu) (glutamate 303). Position 310 is a glutamate methyl ester (Gln) (glutamine 310). The interval 317–336 (QNTDNARQATGLAKTASETA) is disordered. Glutamate methyl ester (Glu) is present on residues glutamate 492 and glutamate 501. The segment at 518–547 (KQPRREASPTTLSKGLTPQPAAEQANWESF) is disordered.

Belongs to the methyl-accepting chemotaxis (MCP) protein family. Post-translationally, methylation level is increased by citrate and decreased by phenol.

The protein localises to the cell inner membrane. In terms of biological role, acts as a receptor for citrate and mediates taxis away from phenol. Also mediates an attractant response to metal-citrate complexes. In Salmonella typhimurium (strain LT2 / SGSC1412 / ATCC 700720), this protein is Methyl-accepting chemotaxis citrate transducer (tcp).